The primary structure comprises 320 residues: uncharacterized protein (320 aa).

Residues 13–132 (ALVLKSLLRE…VLYPEIPSPE (120 aa)) enclose the Arf-GAP domain. The C4-type zinc finger occupies 28 to 52 (CADCKRNEQPRWASWNLGVFICIRC). Disordered stretches follow at residues 153 to 212 (NTAS…STRQ), 227 to 261 (RPQV…YGAF), and 284 to 320 (NVTS…DVWK). Residues 154–176 (TASRSSSAHSVKSTSSATVTNVT) are compositionally biased toward low complexity. 2 stretches are compositionally biased toward polar residues: residues 183–210 (SATT…APST) and 228–244 (PQVS…YQNL). 2 stretches are compositionally biased toward low complexity: residues 245–257 (PSPV…SSQP) and 295–310 (SPVQ…SLDS).

Its subcellular location is the cytoplasm. The protein resides in the golgi apparatus. Its function is as follows. GTPase-activating protein for the ADP ribosylation factor family. This is an uncharacterized protein from Schizosaccharomyces pombe (strain 972 / ATCC 24843) (Fission yeast).